The sequence spans 263 residues: Endonuclease 8 (263 aa).

The Schiff-base intermediate with DNA role is filled by proline 2. The active-site Proton donor is glutamate 3. The active-site Proton donor; for beta-elimination activity is lysine 53. Residues glutamine 70, arginine 125, and asparagine 169 each coordinate DNA. The FPG-type zinc-finger motif lies at 229–263 (KVFHRDGEPCERCGGIIEKTTLSSRPFYWCPGCQH). Arginine 253 serves as the catalytic Proton donor; for delta-elimination activity.

The protein belongs to the FPG family. It depends on Zn(2+) as a cofactor.

The catalysed reaction is 2'-deoxyribonucleotide-(2'-deoxyribose 5'-phosphate)-2'-deoxyribonucleotide-DNA = a 3'-end 2'-deoxyribonucleotide-(2,3-dehydro-2,3-deoxyribose 5'-phosphate)-DNA + a 5'-end 5'-phospho-2'-deoxyribonucleoside-DNA + H(+). Functionally, involved in base excision repair of DNA damaged by oxidation or by mutagenic agents. Acts as a DNA glycosylase that recognizes and removes damaged bases. Has a preference for oxidized pyrimidines, such as thymine glycol, 5,6-dihydrouracil and 5,6-dihydrothymine. Has AP (apurinic/apyrimidinic) lyase activity and introduces nicks in the DNA strand. Cleaves the DNA backbone by beta-delta elimination to generate a single-strand break at the site of the removed base with both 3'- and 5'-phosphates. This Escherichia coli (strain UTI89 / UPEC) protein is Endonuclease 8.